Consider the following 207-residue polypeptide: Imidazole glycerol phosphate synthase subunit HisH (207 aa).

The Glutamine amidotransferase type-1 domain occupies 1-207 (MIGIIDYGMG…KRFGQLVEGN (207 aa)). Catalysis depends on C79, which acts as the Nucleophile. Active-site residues include H185 and E187.

In terms of assembly, heterodimer of HisH and HisF.

It localises to the cytoplasm. The enzyme catalyses 5-[(5-phospho-1-deoxy-D-ribulos-1-ylimino)methylamino]-1-(5-phospho-beta-D-ribosyl)imidazole-4-carboxamide + L-glutamine = D-erythro-1-(imidazol-4-yl)glycerol 3-phosphate + 5-amino-1-(5-phospho-beta-D-ribosyl)imidazole-4-carboxamide + L-glutamate + H(+). The catalysed reaction is L-glutamine + H2O = L-glutamate + NH4(+). It participates in amino-acid biosynthesis; L-histidine biosynthesis; L-histidine from 5-phospho-alpha-D-ribose 1-diphosphate: step 5/9. Its function is as follows. IGPS catalyzes the conversion of PRFAR and glutamine to IGP, AICAR and glutamate. The HisH subunit catalyzes the hydrolysis of glutamine to glutamate and ammonia as part of the synthesis of IGP and AICAR. The resulting ammonia molecule is channeled to the active site of HisF. This chain is Imidazole glycerol phosphate synthase subunit HisH, found in Shouchella clausii (strain KSM-K16) (Alkalihalobacillus clausii).